Reading from the N-terminus, the 739-residue chain is DNA ligase (739 aa).

NAD(+) is bound at residue Asp-34 to Asp-38. Over residues Ala-49–Ser-59 the composition is skewed to basic and acidic residues. The segment at Ala-49 to Glu-70 is disordered. NAD(+) contacts are provided by residues Ser-83–Leu-84 and Glu-117. The active-site N6-AMP-lysine intermediate is the Lys-119. Arg-140, Glu-175, Lys-291, and Lys-315 together coordinate NAD(+). Zn(2+) contacts are provided by Cys-420, Cys-423, Cys-438, and Cys-444. The 80-residue stretch at Ala-660 to Leu-739 folds into the BRCT domain.

It belongs to the NAD-dependent DNA ligase family. LigA subfamily. The cofactor is Mg(2+). Mn(2+) serves as cofactor.

It catalyses the reaction NAD(+) + (deoxyribonucleotide)n-3'-hydroxyl + 5'-phospho-(deoxyribonucleotide)m = (deoxyribonucleotide)n+m + AMP + beta-nicotinamide D-nucleotide.. Functionally, DNA ligase that catalyzes the formation of phosphodiester linkages between 5'-phosphoryl and 3'-hydroxyl groups in double-stranded DNA using NAD as a coenzyme and as the energy source for the reaction. It is essential for DNA replication and repair of damaged DNA. In Ruegeria pomeroyi (strain ATCC 700808 / DSM 15171 / DSS-3) (Silicibacter pomeroyi), this protein is DNA ligase.